A 269-amino-acid chain; its full sequence is NAD kinase (269 aa).

Asp-45 (proton acceptor) is an active-site residue. Residues 45–46, 121–122, Arg-147, Asp-149, 160–165, and Ala-184 each bind NAD(+); these read DG, NE, and TAYNRS.

Belongs to the NAD kinase family. A divalent metal cation is required as a cofactor.

The protein localises to the cytoplasm. It carries out the reaction NAD(+) + ATP = ADP + NADP(+) + H(+). Involved in the regulation of the intracellular balance of NAD and NADP, and is a key enzyme in the biosynthesis of NADP. Catalyzes specifically the phosphorylation on 2'-hydroxyl of the adenosine moiety of NAD to yield NADP. The chain is NAD kinase from Pediococcus pentosaceus (strain ATCC 25745 / CCUG 21536 / LMG 10740 / 183-1w).